The primary structure comprises 229 residues: Orotidine 5'-phosphate decarboxylase (229 aa).

Substrate is bound by residues Asp10, Lys32, 59 to 68, Thr119, Arg180, Gln189, Gly209, and Arg210; that span reads DLKFHDIPNT. Residue Lys61 is the Proton donor of the active site.

Belongs to the OMP decarboxylase family. Type 1 subfamily. In terms of assembly, homodimer.

It carries out the reaction orotidine 5'-phosphate + H(+) = UMP + CO2. It participates in pyrimidine metabolism; UMP biosynthesis via de novo pathway; UMP from orotate: step 2/2. Functionally, catalyzes the decarboxylation of orotidine 5'-monophosphate (OMP) to uridine 5'-monophosphate (UMP). This is Orotidine 5'-phosphate decarboxylase from Legionella pneumophila subsp. pneumophila (strain Philadelphia 1 / ATCC 33152 / DSM 7513).